Here is a 42-residue protein sequence, read N- to C-terminus: Serine/threonine-protein phosphatase 5 (42 aa).

Residues Gln38–Met42 form a required for autoinhibition region.

The protein belongs to the PPP phosphatase family. PP-5 (PP-T) subfamily. As to quaternary structure, probably forms a complex composed of chaperones HSP90 and HSP70, co-chaperones STIP1/HOP, CDC37, PPP5C, PTGES3/p23, TSC1 and client protein TSC2. Probably forms a complex composed of chaperones HSP90 and HSP70, co-chaperones CDC37, PPP5C, TSC1 and client protein TSC2, CDK4, AKT, RAF1 and NR3C1; this complex does not contain co-chaperones STIP1/HOP and PTGES3/p23. Part of a complex with HSP90/HSP90AA1 and steroid receptors. Interacts (via TPR repeats) with HSP90AA1 (via TPR repeat-binding motif) or HSPA1A/HSPA1B; the interaction is direct and activates the phosphatase activity. Dissociates from HSPA1A/HSPA1B and HSP90AA1 in response to arachidonic acid. Interacts with CPNE1 (via VWFA domain). Interacts with CDC16, CDC27. Interacts with KLHDC10 (via the 6 Kelch repeats); inhibits the phosphatase activity on MAP3K5. Interacts with ATM and ATR; both interactions are induced by DNA damage and enhance ATM and ATR kinase activity. Interacts with RAD17; reduced by DNA damage. Interacts with nuclear receptors such as NR3C1/GCR and PPARG (activated by agonist); regulates their transactivation activities. Interacts (via TPR repeats) with S100 proteins S100A1, S100A2, S100A6, S100B and S100P; the interactions are calcium-dependent, strongly activate PPP5C phosphatase activity and compete with HSP90AA1 and MAP3K5 interactions. Interacts with SMAD2 and SMAD3 but not with SMAD1; decreases SMAD3 phosphorylation and protein levels. Interacts (via TPR repeats) with CRY1 and CRY2; the interaction with CRY2 down-regulates the phosphatase activity on CSNK1E. Interacts (via TPR repeats) with the active form of RAC1, GNA12 or GNA13; these interactions activate the phosphatase activity and translocate PPP5C to the cell membrane. Interacts with FLCN. Mg(2+) is required as a cofactor. Requires Mn(2+) as cofactor. In terms of processing, activated by at least two different proteolytic cleavages producing a 56 kDa and a 50 kDa form.

The protein localises to the nucleus. Its subcellular location is the cytoplasm. It is found in the cell membrane. It catalyses the reaction O-phospho-L-seryl-[protein] + H2O = L-seryl-[protein] + phosphate. It carries out the reaction O-phospho-L-threonyl-[protein] + H2O = L-threonyl-[protein] + phosphate. Its activity is regulated as follows. Autoinhibited. In the autoinhibited state, the TPR domain interacts with the catalytic region and prevents substrate access to the catalytic pocket. Allosterically activated by various polyunsaturated fatty acids, free long-chain fatty-acids and long-chain fatty acyl-CoA esters, arachidonic acid being the most effective activator. HSP90A and probably RAC1, GNA12 and GNA13 can also release the autoinhibition by the TPR repeat. Activation by RAC1, GNA12 and GNA13 is synergistic with the one produced by fatty acids binding. Inhibited by okadaic acid. Its function is as follows. Serine/threonine-protein phosphatase that dephosphorylates a myriad of proteins involved in different signaling pathways including the kinases CSNK1E, ASK1/MAP3K5, PRKDC and RAF1, the nuclear receptors NR3C1, PPARG, ESR1 and ESR2, SMAD proteins and TAU/MAPT. Implicated in wide ranging cellular processes, including apoptosis, differentiation, DNA damage response, cell survival, regulation of ion channels or circadian rhythms, in response to steroid and thyroid hormones, calcium, fatty acids, TGF-beta as well as oxidative and genotoxic stresses. Participates in the control of DNA damage response mechanisms such as checkpoint activation and DNA damage repair through, for instance, the regulation ATM/ATR-signaling and dephosphorylation of PRKDC and TP53BP1. Inhibits ASK1/MAP3K5-mediated apoptosis induced by oxidative stress. Plays a positive role in adipogenesis, mainly through the dephosphorylation and activation of PPARG transactivation function. Also dephosphorylates and inhibits the anti-adipogenic effect of NR3C1. Regulates the circadian rhythms, through the dephosphorylation and activation of CSNK1E. May modulate TGF-beta signaling pathway by the regulation of SMAD3 phosphorylation and protein expression levels. Dephosphorylates and may play a role in the regulation of TAU/MAPT. Through their dephosphorylation, may play a role in the regulation of ions channels such as KCNH2. Dephosphorylate FNIP1, disrupting interaction with HSP90AA1/Hsp90. The polypeptide is Serine/threonine-protein phosphatase 5 (PPP5C) (Oryctolagus cuniculus (Rabbit)).